A 162-amino-acid polypeptide reads, in one-letter code: Protein NrdI (162 aa).

This sequence belongs to the NrdI family.

Its function is as follows. Probably involved in ribonucleotide reductase function. The chain is Protein NrdI from Streptococcus pyogenes serotype M2 (strain MGAS10270).